The sequence spans 128 residues: Flagellar basal body rod protein FlgB (128 aa).

Belongs to the flagella basal body rod proteins family. The basal body constitutes a major portion of the flagellar organelle and consists of a number of rings mounted on a central rod. In Gram-negative bacteria, at least four rings, L, P, S and M are present, whereas Gram-positive bacteria lack the L and P rings. The rod consists of about 26 subunits of FlgG in the distal portion, and FlgB, FlgC and FlgF build up the proximal portion of the rod with about 6 subunits each. Rod assembly occurs by export via the flagellum-specific pathway of its constituent proteins and by their incorporation into the rod structure in the probable order of FlgB, FlgC, FlgF and FlgG. Another protein, FliE, also assembles onto the stable rod structure.

The protein resides in the bacterial flagellum basal body. In terms of biological role, structural component of flagellum, the bacterial motility apparatus. Part of the rod structure of flagellar basal body. The chain is Flagellar basal body rod protein FlgB from Cereibacter sphaeroides (strain ATCC 17029 / ATH 2.4.9) (Rhodobacter sphaeroides).